A 169-amino-acid polypeptide reads, in one-letter code: Putative tRNA (cytidine(34)-2'-O)-methyltransferase (169 aa).

Val79, Gly104, Ile125, and Ser134 together coordinate S-adenosyl-L-methionine.

The protein belongs to the class IV-like SAM-binding methyltransferase superfamily. RNA methyltransferase TrmH family. TrmL subfamily.

The protein localises to the cytoplasm. It carries out the reaction cytidine(34) in tRNA + S-adenosyl-L-methionine = 2'-O-methylcytidine(34) in tRNA + S-adenosyl-L-homocysteine + H(+). The catalysed reaction is 5-carboxymethylaminomethyluridine(34) in tRNA(Leu) + S-adenosyl-L-methionine = 5-carboxymethylaminomethyl-2'-O-methyluridine(34) in tRNA(Leu) + S-adenosyl-L-homocysteine + H(+). Functionally, could methylate the ribose at the nucleotide 34 wobble position in tRNA. This chain is Putative tRNA (cytidine(34)-2'-O)-methyltransferase, found in Lactococcus lactis subsp. cremoris (strain MG1363).